Reading from the N-terminus, the 292-residue chain is Non-homologous end joining protein Ku (292 aa).

Residues 9–187 enclose the Ku domain; the sequence is ITFGLVNVPV…TVPPITEREL (179 aa). Residues 264–285 are compositionally biased toward low complexity; sequence AASAFPAAEKAPAGKNAATASA. The tract at residues 264-292 is disordered; sequence AASAFPAAEKAPAGKNAATASAKKARKLA.

This sequence belongs to the prokaryotic Ku family. As to quaternary structure, homodimer. Interacts with LigD.

With LigD forms a non-homologous end joining (NHEJ) DNA repair enzyme, which repairs dsDNA breaks with reduced fidelity. Binds linear dsDNA with 5'- and 3'- overhangs but not closed circular dsDNA nor ssDNA. Recruits and stimulates the ligase activity of LigD. The polypeptide is Non-homologous end joining protein Ku (Leifsonia xyli subsp. xyli (strain CTCB07)).